The primary structure comprises 326 residues: Phosphotriesterase homology protein (326 aa).

The Zn(2+) site is built by histidine 22, histidine 24, lysine 145, histidine 178, histidine 207, and aspartate 264. Residue lysine 145 is modified to N6-carboxylysine.

It belongs to the metallo-dependent hydrolases superfamily. Phosphotriesterase family. The cofactor is Zn(2+).

The sequence is that of Phosphotriesterase homology protein (php) from Mycobacterium tuberculosis (strain CDC 1551 / Oshkosh).